We begin with the raw amino-acid sequence, 249 residues long: FMN reductase (NADPH) (249 aa).

Belongs to the flavin oxidoreductase frp family. In terms of assembly, homodimer.

It carries out the reaction FMNH2 + NADP(+) = FMN + NADPH + 2 H(+). Its function is as follows. Reduces FMNH(2) to FMN, with NADPH as reductant. It also reduces nitroaromatic compounds, quinones and azo dyes. This Bacillus subtilis (strain 168) protein is FMN reductase (NADPH) (nfrA1).